Here is a 223-residue protein sequence, read N- to C-terminus: UPF0502 protein Avin_04790 (223 aa).

The protein belongs to the UPF0502 family.

This is UPF0502 protein Avin_04790 from Azotobacter vinelandii (strain DJ / ATCC BAA-1303).